Reading from the N-terminus, the 288-residue chain is Orotidine 5'-phosphate decarboxylase (288 aa).

Residue Lys97 is the Proton donor of the active site.

Belongs to the OMP decarboxylase family. Type 2 subfamily.

The enzyme catalyses orotidine 5'-phosphate + H(+) = UMP + CO2. The protein operates within pyrimidine metabolism; UMP biosynthesis via de novo pathway; UMP from orotate: step 2/2. The polypeptide is Orotidine 5'-phosphate decarboxylase (Clostridium tetani (strain Massachusetts / E88)).